The following is an 879-amino-acid chain: Phosphoenolpyruvate carboxylase (879 aa).

Residues His-138 and Lys-546 contribute to the active site.

Belongs to the PEPCase type 1 family. Mg(2+) is required as a cofactor.

It carries out the reaction oxaloacetate + phosphate = phosphoenolpyruvate + hydrogencarbonate. Forms oxaloacetate, a four-carbon dicarboxylic acid source for the tricarboxylic acid cycle. The protein is Phosphoenolpyruvate carboxylase of Pectobacterium atrosepticum (strain SCRI 1043 / ATCC BAA-672) (Erwinia carotovora subsp. atroseptica).